Here is a 461-residue protein sequence, read N- to C-terminus: Major capsid protein (461 aa).

Polar residues predominate over residues 1-18 (MSTPTISADTTAQNATST). The interval 1-22 (MSTPTISADTTAQNATSTEVRE) is disordered.

The protein localises to the virion. Functionally, major protein of the capsid. This is Major capsid protein (MCP) from Spodoptera frugiperda ascovirus 1a (SfAV-1a).